We begin with the raw amino-acid sequence, 362 residues long: Phosphoserine aminotransferase (362 aa).

Residues S9 and R42 each contribute to the L-glutamate site. Pyridoxal 5'-phosphate is bound by residues 76 to 77, W102, T153, D174, and Q197; that span reads GR. At K198 the chain carries N6-(pyridoxal phosphate)lysine. 239–240 is a pyridoxal 5'-phosphate binding site; that stretch reads NT.

The protein belongs to the class-V pyridoxal-phosphate-dependent aminotransferase family. SerC subfamily. In terms of assembly, homodimer. The cofactor is pyridoxal 5'-phosphate.

It is found in the cytoplasm. The enzyme catalyses O-phospho-L-serine + 2-oxoglutarate = 3-phosphooxypyruvate + L-glutamate. The catalysed reaction is 4-(phosphooxy)-L-threonine + 2-oxoglutarate = (R)-3-hydroxy-2-oxo-4-phosphooxybutanoate + L-glutamate. Its pathway is amino-acid biosynthesis; L-serine biosynthesis; L-serine from 3-phospho-D-glycerate: step 2/3. It participates in cofactor biosynthesis; pyridoxine 5'-phosphate biosynthesis; pyridoxine 5'-phosphate from D-erythrose 4-phosphate: step 3/5. In terms of biological role, catalyzes the reversible conversion of 3-phosphohydroxypyruvate to phosphoserine and of 3-hydroxy-2-oxo-4-phosphonooxybutanoate to phosphohydroxythreonine. This is Phosphoserine aminotransferase from Salmonella agona (strain SL483).